The chain runs to 648 residues: MSLKLPRNWDFNLKAEASKIARSRSVMTGEQMAAFHPPTTPNPLERPIKVGWLKKQRSIVKNWQQRYFVLRAQQLYYYKDEEDSKPQGCMYLPGSTVKEIATNPEEAGKFVFEVIPASSDQNRIGQDSYVLMASSQVEMEEWVKFLRRVAGTPSGAVFGQRLDETVAYEQKFGPHLVPILVEKCAEFILEHGVSEEGIFRLPGQDNLVKQLRDAFDAGERPSFDRDTDVHTVASLLKLYLRDLPEPVVPWSQYEGFLLCGQLMNADEAKAQQELVKQLSTLPRDNYNLLSYICRFLHEIQLNCAVNKMSVDNLATVIGVNLIRSKVEDPAVIMRGTPQIQRVMTMMIRDHEVLFPKSKDAPISPPAQKNDAKKAPVPRSSVGWDATEDPPLSRTDSFSNTASSPDATSPTGPLPSDQHQEDSGKAPRENPGDWKMQSRKRTQTLPNRKCFLTSAFQGTTSSKLEIFKNEFWSPSSEAKAGEGHRRTMSQDLRHLSNDQRTSTYDNVPTSPQSQGNPAGALSPPASDSKRDALVSTDSEMEAGSKNSGEDDLDSLQRTVQSLQKEIETQKQVYEEQIKNLEKENYDVWAKVVRLNEELERERKKFAALEISLRNVERSREDVEKRNRVLEEEVKEFVKSMEKPKTKTDP.

Residues 46-151 enclose the PH domain; sequence RPIKVGWLKK…WVKFLRRVAG (106 aa). In terms of domain architecture, Rho-GAP spans 160 to 354; it reads QRLDETVAYE…MMIRDHEVLF (195 aa). Positions 356–559 are disordered; it reads KSKDAPISPP…DLDSLQRTVQ (204 aa). 3 positions are modified to phosphoserine: Ser-363, Ser-396, and Ser-403. The segment covering 393–410 has biased composition (polar residues); the sequence is RTDSFSNTASSPDATSPT. At Thr-407 the chain carries Phosphothreonine. Positions 417–431 are enriched in basic and acidic residues; that stretch reads QHQEDSGKAPRENPG. Polar residues-rich tracts occupy residues 453–462 and 497–515; these read SAFQGTTSSK and DQRTSTYDNVPTSPQSQGN. Residue Ser-537 is modified to Phosphoserine. Residues 540–641 adopt a coiled-coil conformation; sequence EAGSKNSGED…VKEFVKSMEK (102 aa).

Functionally, GTPase activator for the Rho-type GTPases by converting them to an inactive GDP-bound state. The chain is Rho GTPase-activating protein 25 (Arhgap25) from Mus musculus (Mouse).